The primary structure comprises 138 residues: Small ribosomal subunit protein uS9c (138 aa).

The protein belongs to the universal ribosomal protein uS9 family.

It is found in the plastid. It localises to the chloroplast. In Phaeodactylum tricornutum (strain CCAP 1055/1), this protein is Small ribosomal subunit protein uS9c (rps9).